Here is a 923-residue protein sequence, read N- to C-terminus: Alanine--tRNA ligase (923 aa).

Zn(2+)-binding residues include His-614, His-618, Cys-717, and His-721. The tract at residues 884–903 (KVGGGGGGPPDFAQGGGPDA) is disordered. The span at 885–901 (VGGGGGGPPDFAQGGGP) shows a compositional bias: gly residues.

It belongs to the class-II aminoacyl-tRNA synthetase family. It depends on Zn(2+) as a cofactor.

The protein localises to the cytoplasm. It catalyses the reaction tRNA(Ala) + L-alanine + ATP = L-alanyl-tRNA(Ala) + AMP + diphosphate. Its function is as follows. Catalyzes the attachment of alanine to tRNA(Ala) in a two-step reaction: alanine is first activated by ATP to form Ala-AMP and then transferred to the acceptor end of tRNA(Ala). Also edits incorrectly charged Ser-tRNA(Ala) and Gly-tRNA(Ala) via its editing domain. The polypeptide is Alanine--tRNA ligase (Haloquadratum walsbyi (strain DSM 16790 / HBSQ001)).